The chain runs to 211 residues: Thiamine-phosphate synthase (211 aa).

Residues 37–41 (QLRIK) and Asn-69 each bind 4-amino-2-methyl-5-(diphosphooxymethyl)pyrimidine. 2 residues coordinate Mg(2+): Asp-70 and Asp-89. Ser-108 provides a ligand contact to 4-amino-2-methyl-5-(diphosphooxymethyl)pyrimidine. 134–136 (TQT) provides a ligand contact to 2-[(2R,5Z)-2-carboxy-4-methylthiazol-5(2H)-ylidene]ethyl phosphate. Residue Lys-137 participates in 4-amino-2-methyl-5-(diphosphooxymethyl)pyrimidine binding. Residues Gly-166 and 186–187 (VS) each bind 2-[(2R,5Z)-2-carboxy-4-methylthiazol-5(2H)-ylidene]ethyl phosphate.

Belongs to the thiamine-phosphate synthase family. The cofactor is Mg(2+).

The enzyme catalyses 2-[(2R,5Z)-2-carboxy-4-methylthiazol-5(2H)-ylidene]ethyl phosphate + 4-amino-2-methyl-5-(diphosphooxymethyl)pyrimidine + 2 H(+) = thiamine phosphate + CO2 + diphosphate. It carries out the reaction 2-(2-carboxy-4-methylthiazol-5-yl)ethyl phosphate + 4-amino-2-methyl-5-(diphosphooxymethyl)pyrimidine + 2 H(+) = thiamine phosphate + CO2 + diphosphate. It catalyses the reaction 4-methyl-5-(2-phosphooxyethyl)-thiazole + 4-amino-2-methyl-5-(diphosphooxymethyl)pyrimidine + H(+) = thiamine phosphate + diphosphate. The protein operates within cofactor biosynthesis; thiamine diphosphate biosynthesis; thiamine phosphate from 4-amino-2-methyl-5-diphosphomethylpyrimidine and 4-methyl-5-(2-phosphoethyl)-thiazole: step 1/1. Condenses 4-methyl-5-(beta-hydroxyethyl)thiazole monophosphate (THZ-P) and 2-methyl-4-amino-5-hydroxymethyl pyrimidine pyrophosphate (HMP-PP) to form thiamine monophosphate (TMP). The chain is Thiamine-phosphate synthase from Salmonella agona (strain SL483).